A 210-amino-acid polypeptide reads, in one-letter code: MSSLENQLLIAMPSLGDPYFNKTVTYICEHNEDGAMGLIINLPVNITLADLLKQIEPDEGDKTGNVNSNSELTKSDDVNDITLVTDITNSLEQLVLAGGPIAQQRGFVLHSSQPGWSSSLVLSKELMITTSKDILMALGTQQAPEQFIVTLGYAGWGPGQLEQELQANSWLTTPADIEILFKTPIEQRWKKATEKLGIDLAHLSTDIGHA.

This sequence belongs to the UPF0301 (AlgH) family.

The sequence is that of UPF0301 protein CPS_1252 from Colwellia psychrerythraea (strain 34H / ATCC BAA-681) (Vibrio psychroerythus).